We begin with the raw amino-acid sequence, 231 residues long: Killer cell lectin-like receptor subfamily F member 1 (231 aa).

Over 1–38 (MQDEERYMTLNVQSKKRSSAQTSQLTFKDYSVTLHWYK) the chain is Cytoplasmic. Tyr-7 is subject to Phosphotyrosine. Residues 39–59 (ILLGISGTVNGILTLTLISLI) traverse the membrane as a helical; Signal-anchor for type II membrane protein segment. The Extracellular portion of the chain corresponds to 60–231 (LLVSQGVLLK…SSVFKWICQY (172 aa)). N-linked (GlcNAc...) asparagine glycans are attached at residues Asn-77, Asn-91, Asn-96, and Asn-176. The C-type lectin domain occupies 121 to 230 (YQGKCYWFSN…CSSVFKWICQ (110 aa)). Intrachain disulfides connect Cys-142–Cys-229 and Cys-208–Cys-221.

Homodimer. Interacts with CLEC2B. In terms of processing, phosphorylated on Tyr-7; this phosphorylation is required for NKp80/KLRF1-mediated cytotoxicity. In terms of tissue distribution, strongly expressed in peripheral blood leukocytes and spleen, with weaker expression in lymph node and adult liver, and no expression detected in bone marrow, thymus, and fetal liver. Not expressed in brain, heart, placenta, lung, kidney, skeletal muscle, and pancreas. Within peripheral blood leukocyte and immunocyte cell lines, expression was predominant in NK cells but was also detected in monocytes.

It is found in the membrane. In terms of biological role, functions as an activating receptor involved in immunosurveillance upon binding to various ligands displayed at the surface of myeloid cells. Upon interaction with CLEC2B ligand, stimulates NK-cell cytotoxicity and cytokine production leading to the cytolysis of malignant CLEC2B-expressing myeloid cells. Actviation of the common cytotoxicity pathway involves SRC and SYK kinases. This is Killer cell lectin-like receptor subfamily F member 1 (KLRF1) from Homo sapiens (Human).